The sequence spans 239 residues: EF-hand domain-containing protein D2 (239 aa).

The interval Met1–Asp51 is disordered. Position 2 is an N-acetylalanine (Ala2). A Phosphoserine modification is found at Ser11. The segment covering Ala32–Ala46 has biased composition (low complexity). Ser73 and Ser75 each carry phosphoserine. Tyr82 bears the Phosphotyrosine mark. 2 consecutive EF-hand domains span residues Lys91–Pro126 and Gln127–Gly162. The Ca(2+) site is built by Asp104, Asp108, Glu115, Asp140, Asp142, Asp144, Lys146, and Glu151. Residue Lys232 is modified to N6-acetyllysine.

As to quaternary structure, interacts with CASP9; with inactive form.

The protein resides in the membrane raft. In terms of biological role, may regulate B-cell receptor (BCR)-induced immature and primary B-cell apoptosis. Plays a role as negative regulator of the canonical NF-kappa-B-activating branch. Controls spontaneous apoptosis through the regulation of BCL2L1 abundance. The protein is EF-hand domain-containing protein D2 (Efhd2) of Rattus norvegicus (Rat).